A 158-amino-acid polypeptide reads, in one-letter code: Transcription antitermination protein NusB (158 aa).

The span at 1-13 (MSEAGDTSPQPGK) shows a compositional bias: polar residues. The interval 1 to 24 (MSEAGDTSPQPGKTGQPKAGDRRR) is disordered.

This sequence belongs to the NusB family.

Functionally, involved in transcription antitermination. Required for transcription of ribosomal RNA (rRNA) genes. Binds specifically to the boxA antiterminator sequence of the ribosomal RNA (rrn) operons. This Marinobacter nauticus (strain ATCC 700491 / DSM 11845 / VT8) (Marinobacter aquaeolei) protein is Transcription antitermination protein NusB.